Reading from the N-terminus, the 242-residue chain is Ribonuclease 3 (242 aa).

An RNase III domain is found at 10–146 (LQNFNKKFAD…FVGALYLDQG (137 aa)). Position 59 (E59) interacts with Mg(2+). D63 is an active-site residue. Positions 132 and 135 each coordinate Mg(2+). The active site involves E135. The DRBM domain occupies 172-241 (DFKTQFQELI…AEKAYNDMKK (70 aa)). Positions 216–242 (VAKGQGRTKKESEQKAAEKAYNDMKKK) are disordered. Residues 223-242 (TKKESEQKAAEKAYNDMKKK) are compositionally biased toward basic and acidic residues.

It belongs to the ribonuclease III family. As to quaternary structure, homodimer. It depends on Mg(2+) as a cofactor.

The protein localises to the cytoplasm. It catalyses the reaction Endonucleolytic cleavage to 5'-phosphomonoester.. In terms of biological role, digests double-stranded RNA. Involved in the processing of primary rRNA transcript to yield the immediate precursors to the large and small rRNAs (23S and 16S). Processes some mRNAs, and tRNAs when they are encoded in the rRNA operon. Processes pre-crRNA and tracrRNA of type II CRISPR loci if present in the organism. The polypeptide is Ribonuclease 3 (Staphylococcus carnosus (strain TM300)).